We begin with the raw amino-acid sequence, 58 residues long: Small ribosomal subunit protein uS14 (58 aa).

Residues 1-21 (MSESETEQTGEHASHRTGQTH) are disordered. Residues 9-21 (TGEHASHRTGQTH) are compositionally biased toward basic and acidic residues. Positions 23, 26, 41, and 44 each coordinate Zn(2+).

It belongs to the universal ribosomal protein uS14 family. Zinc-binding uS14 subfamily. As to quaternary structure, part of the 30S ribosomal subunit. Zn(2+) is required as a cofactor.

Its function is as follows. Binds 16S rRNA, required for the assembly of 30S particles. The polypeptide is Small ribosomal subunit protein uS14 (Haloquadratum walsbyi (strain DSM 16790 / HBSQ001)).